Consider the following 1465-residue polypeptide: DNA polymerase III PolC-type (1465 aa).

The Exonuclease domain maps to 431 to 583 (DVETTGLSAM…YDAEATGRLL (153 aa)).

This sequence belongs to the DNA polymerase type-C family. PolC subfamily.

The protein resides in the cytoplasm. It carries out the reaction DNA(n) + a 2'-deoxyribonucleoside 5'-triphosphate = DNA(n+1) + diphosphate. In terms of biological role, required for replicative DNA synthesis. This DNA polymerase also exhibits 3' to 5' exonuclease activity. The chain is DNA polymerase III PolC-type from Streptococcus pyogenes.